Consider the following 231-residue polypeptide: Large ribosomal subunit protein uL1 (231 aa).

Belongs to the universal ribosomal protein uL1 family. In terms of assembly, part of the 50S ribosomal subunit.

Binds directly to 23S rRNA. The L1 stalk is quite mobile in the ribosome, and is involved in E site tRNA release. Functionally, protein L1 is also a translational repressor protein, it controls the translation of the L11 operon by binding to its mRNA. The polypeptide is Large ribosomal subunit protein uL1 (Clostridium kluyveri (strain NBRC 12016)).